Here is a 712-residue protein sequence, read N- to C-terminus: Eukaryotic translation initiation factor 3 subunit B (712 aa).

Residues 1–98 (MSLTEAEYHE…LFVQFETSEM (98 aa)) are sufficient for interaction with HCR1 and TIF32. The tract at residues 1-224 (MSLTEAEYHE…GVQSWGGADF (224 aa)) is sufficient for interaction with PIC8. The 88-residue stretch at 37 to 124 (NYVVVDGAPI…HRLLVNRLSD (88 aa)) folds into the RRM domain. WD repeat units lie at residues 191–229 (RKFF…SIDK), 230–293 (FMHN…RTFA), 301–339 (QKEM…LLDK), 342–384 (IKID…QTAR), 452–493 (ELKE…DFYA), 513–555 (ITDK…SNKN), and 566–604 (DKFS…YEFT).

It belongs to the eIF-3 subunit B family. As to quaternary structure, component of the eukaryotic translation initiation factor 3 (eIF-3) complex.

The protein localises to the cytoplasm. RNA-binding component of the eukaryotic translation initiation factor 3 (eIF-3) complex, which is involved in protein synthesis of a specialized repertoire of mRNAs and, together with other initiation factors, stimulates binding of mRNA and methionyl-tRNAi to the 40S ribosome. The eIF-3 complex specifically targets and initiates translation of a subset of mRNAs involved in cell proliferation. The protein is Eukaryotic translation initiation factor 3 subunit B of Scheffersomyces stipitis (strain ATCC 58785 / CBS 6054 / NBRC 10063 / NRRL Y-11545) (Yeast).